The following is a 408-amino-acid chain: Histidine--tRNA ligase (408 aa).

It belongs to the class-II aminoacyl-tRNA synthetase family.

The protein localises to the cytoplasm. It carries out the reaction tRNA(His) + L-histidine + ATP = L-histidyl-tRNA(His) + AMP + diphosphate + H(+). The polypeptide is Histidine--tRNA ligase (Methanospirillum hungatei JF-1 (strain ATCC 27890 / DSM 864 / NBRC 100397 / JF-1)).